A 633-amino-acid polypeptide reads, in one-letter code: tRNA uridine 5-carboxymethylaminomethyl modification enzyme MnmG (633 aa).

Residues 15–20 (GAGHAG), Val-127, and Ser-182 each bind FAD. 276 to 290 (GPRYCPSIEDKIVRF) contributes to the NAD(+) binding site. An FAD-binding site is contributed by Gln-373.

It belongs to the MnmG family. Homodimer. Heterotetramer of two MnmE and two MnmG subunits. The cofactor is FAD.

It is found in the cytoplasm. Functionally, NAD-binding protein involved in the addition of a carboxymethylaminomethyl (cmnm) group at the wobble position (U34) of certain tRNAs, forming tRNA-cmnm(5)s(2)U34. This chain is tRNA uridine 5-carboxymethylaminomethyl modification enzyme MnmG, found in Streptococcus thermophilus (strain CNRZ 1066).